We begin with the raw amino-acid sequence, 306 residues long: D-alanine--D-alanine ligase (306 aa).

One can recognise an ATP-grasp domain in the interval 101–303 (KLVWQALGLP…FSQLVARILM (203 aa)). 134 to 189 (VAKLGLPLIVKPSHEGSSVGMSKVDHASELQKALVEAFQHDSDVLIEKWLSGPEFT) serves as a coordination point for ATP. Residues aspartate 257, glutamate 270, and asparagine 272 each coordinate Mg(2+).

The protein belongs to the D-alanine--D-alanine ligase family. Requires Mg(2+) as cofactor. It depends on Mn(2+) as a cofactor.

The protein resides in the cytoplasm. The catalysed reaction is 2 D-alanine + ATP = D-alanyl-D-alanine + ADP + phosphate + H(+). Its pathway is cell wall biogenesis; peptidoglycan biosynthesis. Cell wall formation. The chain is D-alanine--D-alanine ligase from Yersinia pseudotuberculosis serotype O:1b (strain IP 31758).